The sequence spans 176 residues: Ribosome maturation factor RimP (176 aa).

A disordered region spans residues 143 to 176 (LKPQTAKKKGRQEETEDMTLELDAVSRAVPEAEI).

The protein belongs to the RimP family.

Its subcellular location is the cytoplasm. Required for maturation of 30S ribosomal subunits. In Chlorobium luteolum (strain DSM 273 / BCRC 81028 / 2530) (Pelodictyon luteolum), this protein is Ribosome maturation factor RimP.